Here is a 150-residue protein sequence, read N- to C-terminus: Depactin (150 aa).

Residues 3 to 148 (SGTALDENVK…SEEAIGDKIK (146 aa)) form the ADF-H domain.

Belongs to the actin-binding proteins ADF family.

In terms of biological role, depactin interacts with actin at some of its 12 N-terminal residues and 20 C-terminal residues. Binds to actin monomers from filaments and in solution. The polypeptide is Depactin (Asterias amurensis (Northern Pacific seastar)).